The primary structure comprises 332 residues: Phosphate acyltransferase (332 aa).

This sequence belongs to the PlsX family. As to quaternary structure, homodimer. Probably interacts with PlsY.

It is found in the cytoplasm. The catalysed reaction is a fatty acyl-[ACP] + phosphate = an acyl phosphate + holo-[ACP]. It participates in lipid metabolism; phospholipid metabolism. In terms of biological role, catalyzes the reversible formation of acyl-phosphate (acyl-PO(4)) from acyl-[acyl-carrier-protein] (acyl-ACP). This enzyme utilizes acyl-ACP as fatty acyl donor, but not acyl-CoA. The protein is Phosphate acyltransferase of Fusobacterium nucleatum subsp. nucleatum (strain ATCC 25586 / DSM 15643 / BCRC 10681 / CIP 101130 / JCM 8532 / KCTC 2640 / LMG 13131 / VPI 4355).